Consider the following 249-residue polypeptide: LexA repressor (249 aa).

Residues Met-1–Gln-25 form a disordered region. Positions Met-45–Ser-65 form a DNA-binding region, H-T-H motif. Catalysis depends on for autocatalytic cleavage activity residues Ser-173 and Lys-210.

This sequence belongs to the peptidase S24 family. In terms of assembly, homodimer.

It carries out the reaction Hydrolysis of Ala-|-Gly bond in repressor LexA.. Functionally, represses a number of genes involved in the response to DNA damage (SOS response), including recA and lexA. In the presence of single-stranded DNA, RecA interacts with LexA causing an autocatalytic cleavage which disrupts the DNA-binding part of LexA, leading to derepression of the SOS regulon and eventually DNA repair. The chain is LexA repressor from Pseudarthrobacter chlorophenolicus (strain ATCC 700700 / DSM 12829 / CIP 107037 / JCM 12360 / KCTC 9906 / NCIMB 13794 / A6) (Arthrobacter chlorophenolicus).